We begin with the raw amino-acid sequence, 528 residues long: Neuronal acetylcholine receptor subunit alpha-2 (528 aa).

Positions 1–23 (MGWPCRSIIPLLVWCFVTLQAAT) are cleaved as a signal peptide. The Extracellular segment spans residues 24-239 (REQKQPHGFA…ITFYFVIRRL (216 aa)). Residues asparagine 54 and asparagine 104 are each glycosylated (N-linked (GlcNAc...) asparagine). 2 disulfides stabilise this stretch: cysteine 158-cysteine 172 and cysteine 222-cysteine 223. The next 3 helical transmembrane spans lie at 240-264 (PLFY…VFYL), 272-290 (ITLC…LLIT), and 306-327 (YLLF…VLNV). Residues 328-501 (HHRSPSTHTM…WKYVAMVIDR (174 aa)) are Cytoplasmic-facing. Residues 390 to 410 (DDKWEEEEEEEEEEEEEEEEE) show a composition bias toward acidic residues. The segment at 390-427 (DDKWEEEEEEEEEEEEEEEEEKAYPSRVPSGGSQGTQC) is disordered. Residues 502-520 (IFLWMFIIVCLLGTVGLFL) form a helical membrane-spanning segment.

This sequence belongs to the ligand-gated ion channel (TC 1.A.9) family. Acetylcholine receptor (TC 1.A.9.1) subfamily. Alpha-2/CHRNA2 sub-subfamily. As to quaternary structure, neuronal AChR is composed of two different types of subunits: alpha and non-alpha (beta). CHRNA2/alpha-2 subunit can be combined to CHRNB2/beta-2 or CHRNB4/beta-4 to give rise to functional receptors. Both CHRNA2:CHRNB2 and CHRNA2:CHRNB4 nAChR complexes are heteropentamers with two subtypes: LS (low agonist sensitivity) with a (CHRNA2)3:(CHRNB2/4)2 and HS (high agonist sensitivity) with a (CHRNA2)2:(CHRNB2/4)3 stoichiometries; the subtypes differ in their subunit binding interfaces which are involved in ligand binding.

It localises to the synaptic cell membrane. The protein resides in the cell membrane. It catalyses the reaction Ca(2+)(in) = Ca(2+)(out). The enzyme catalyses K(+)(in) = K(+)(out). It carries out the reaction Na(+)(in) = Na(+)(out). Its function is as follows. Component of neuronal acetylcholine receptors (nAChRs) that function as pentameric, ligand-gated cation channels with high calcium permeability among other activities. nAChRs are excitatory neurotrasnmitter receptors formed by a collection of nAChR subunits known to mediate synaptic transmission in the nervous system and the neuromuscular junction. Each nAchR subunit confers differential attributes to channel properties, including activation, deactivation and desensitization kinetics, pH sensitivity, cation permeability, and binding to allosteric modulators. CHRNA2 forms heteropentameric neuronal acetylcholine receptors with CHRNB2 and CHRNB4 and plays a role in nicotine dependence. This Gallus gallus (Chicken) protein is Neuronal acetylcholine receptor subunit alpha-2 (CHRNA2).